Here is a 431-residue protein sequence, read N- to C-terminus: Serine/threonine-protein kinase Sgk1 (431 aa).

Residues 1 to 60 (MTVKTEAARGPLTYSRMRGMVAILIAFMKQRRMGLNDFIQKIANNSYACKHTEVQSILKI) are necessary for localization to the mitochondria. Positions 66-92 (PELMNANPSPPPSPSQQINLGPSSNPH) are disordered. Residue Ser74 is modified to Phosphoserine. Phosphoserine; by MAPK7 is present on Ser78. Positions 81-91 (QQINLGPSSNP) are enriched in polar residues. The Protein kinase domain occupies 98–355 (FHFLKVIGKG…FMEIRNHVFF (258 aa)). ATP contacts are provided by residues 104–112 (IGKGSFGKV) and Lys127. The Nuclear localization signal signature appears at 131-141 (KKAILKKKEEK). Catalysis depends on Asp222, which acts as the Proton acceptor. Thr256 bears the Phosphothreonine; by PDPK1 mark. An AGC-kinase C-terminal domain is found at 356–431 (SLINWDDLIN…SYAPPMDSFL (76 aa)). Phosphothreonine; by PKA is present on Thr369. 3 positions are modified to phosphoserine: Ser397, Ser401, and Ser422.

The protein belongs to the protein kinase superfamily. AGC Ser/Thr protein kinase family. Homodimer; disulfide-linked. Forms a trimeric complex with FBXW7 and NOTCH1. Interacts with MAPK3/ERK1, MAPK1/ERK2, MAP2K1/MEK1, MAP2K2/MEK2, NEDD4, NEDD4L, MAPT/TAU, MAPK7, CREB1, SLC9A3R2/NHERF2 and KCNJ1/ROMK1. Associates with the mammalian target of rapamycin complex 2 (mTORC2) via an interaction with MAPKAP1/SIN1. Post-translationally, regulated by phosphorylation. Activated by phosphorylation on Ser-422 by mTORC2, transforming it into a substrate for PDPK1 which phosphorylates it on Thr-256. Phosphorylation on Ser-397 and Ser-401 are also essential for its activity. Phosphorylation on Ser-78 by MAPK7 is required for growth factor-induced cell cycle progression. In terms of processing, ubiquitinated by NEDD4L; which promotes proteasomal degradation. Ubiquitinated by SYVN1 at the endoplasmic reticulum; which promotes rapid proteasomal degradation and maintains a high turnover rate in resting cells.

The protein localises to the cytoplasm. The protein resides in the nucleus. Its subcellular location is the endoplasmic reticulum membrane. It localises to the cell membrane. It is found in the mitochondrion. It catalyses the reaction L-seryl-[protein] + ATP = O-phospho-L-seryl-[protein] + ADP + H(+). It carries out the reaction L-threonyl-[protein] + ATP = O-phospho-L-threonyl-[protein] + ADP + H(+). Two specific sites, one in the kinase domain (Thr-256) and the other in the C-terminal regulatory region (Ser-422), need to be phosphorylated for its full activation. Phosphorylation at Ser-397 and Ser-401 are also essential for its activity. Activated by WNK1, WNK2, WNK3 and WNK4; which promote phosphorylation by mTORC2. Functionally, serine/threonine-protein kinase which is involved in the regulation of a wide variety of ion channels, membrane transporters, cellular enzymes, transcription factors, neuronal excitability, cell growth, proliferation, survival, migration and apoptosis. Plays an important role in cellular stress response. Contributes to regulation of renal Na(+) retention, renal K(+) elimination, salt appetite, gastric acid secretion, intestinal Na(+)/H(+) exchange and nutrient transport, insulin-dependent salt sensitivity of blood pressure, salt sensitivity of peripheral glucose uptake, cardiac repolarization and memory consolidation. Up-regulates Na(+) channels: SCNN1A/ENAC, SCN5A and ASIC1/ACCN2, K(+) channels: KCNJ1/ROMK1, KCNA1-5, KCNQ1-5 and KCNE1, epithelial Ca(2+) channels: TRPV5 and TRPV6, chloride channels: BSND, CLCN2 and CFTR, glutamate transporters: SLC1A3/EAAT1, SLC1A2 /EAAT2, SLC1A1/EAAT3, SLC1A6/EAAT4 and SLC1A7/EAAT5, amino acid transporters: SLC1A5/ASCT2, SLC38A1/SN1 and SLC6A19, creatine transporter: SLC6A8, Na(+)/dicarboxylate cotransporter: SLC13A2/NADC1, Na(+)-dependent phosphate cotransporter: SLC34A2/NAPI-2B, glutamate receptor: GRIK2/GLUR6. Up-regulates carriers: SLC9A3/NHE3, SLC12A1/NKCC2, SLC12A3/NCC, SLC5A3/SMIT, SLC2A1/GLUT1, SLC5A1/SGLT1 and SLC15A2/PEPT2. Regulates enzymes: GSK3A/B, PMM2 and Na(+)/K(+) ATPase, and transcription factors: CTNNB1 and nuclear factor NF-kappa-B. Stimulates sodium transport into epithelial cells by enhancing the stability and expression of SCNN1A/ENAC. This is achieved by phosphorylating the NEDD4L ubiquitin E3 ligase, promoting its interaction with 14-3-3 proteins, thereby preventing it from binding to SCNN1A/ENAC and targeting it for degradation. Regulates store-operated Ca(+2) entry (SOCE) by stimulating ORAI1 and STIM1. Regulates KCNJ1/ROMK1 directly via its phosphorylation or indirectly via increased interaction with SLC9A3R2/NHERF2. Phosphorylates MDM2 and activates MDM2-dependent ubiquitination of p53/TP53. Phosphorylates MAPT/TAU and mediates microtubule depolymerization and neurite formation in hippocampal neurons. Phosphorylates SLC2A4/GLUT4 and up-regulates its activity. Phosphorylates APBB1/FE65 and promotes its localization to the nucleus. Phosphorylates MAPK1/ERK2 and activates it by enhancing its interaction with MAP2K1/MEK1 and MAP2K2/MEK2. Phosphorylates FBXW7 and plays an inhibitory role in the NOTCH1 signaling. Phosphorylates FOXO1 resulting in its relocalization from the nucleus to the cytoplasm. Phosphorylates FOXO3, promoting its exit from the nucleus and interference with FOXO3-dependent transcription. Phosphorylates BRAF and MAP3K3/MEKK3 and inhibits their activity. Phosphorylates SLC9A3/NHE3 in response to dexamethasone, resulting in its activation and increased localization at the cell membrane. Phosphorylates CREB1. Necessary for vascular remodeling during angiogenesis. In Oryctolagus cuniculus (Rabbit), this protein is Serine/threonine-protein kinase Sgk1 (SGK1).